The chain runs to 1351 residues: Bromodomain-containing protein 4A (1351 aa).

Disordered stretches follow at residues 1 to 23 (MSSE…GIEG), 35 to 58 (PQPQ…QPKR), 168 to 244 (ETEL…RPPA), 285 to 368 (AAQP…DTKT), 478 to 638 (EPEE…PMSY), 700 to 799 (CLRK…LDSS), and 821 to 1334 (PDLP…PSID). Positions 58 to 164 (RQTNQLQYLL…KLFLQKISEM (107 aa)) constitute a Bromo 1 domain. The span at 208-219 (VKPPVTPVSKPS) shows a compositional bias: low complexity. The segment covering 220–235 (TPTPPTVTRAPTPPQT) has biased composition (pro residues). Residues 327-343 (PRKENGRQIRPTKKTEV) show a composition bias toward basic and acidic residues. Residues 349–359 (PAPPVLHPQPA) show a composition bias toward pro residues. One can recognise a Bromo 2 domain in the interval 366–475 (TKTSEQLRYC…DVFEMRFAKM (110 aa)). The segment covering 482–504 (APAPVPSLAPGPPAPSIKGPPPT) has biased composition (pro residues). The interval 504 to 522 (TSSDSSSDSTSDSESSSDS) is NPS region. The segment covering 505-517 (SSDSSSDSTSDSE) has biased composition (low complexity). The segment at 543-598 (QLAALSQPQPNKPKKKEREKRKEKHKRKEEVEEPRKGRIREPPAKKPKKSVQGSGG) is BID region. Residues 554–569 (KPKKKEREKRKEKHKR) are compositionally biased toward basic residues. The span at 570-586 (KEEVEEPRKGRIREPPA) shows a compositional bias: basic and acidic residues. Positions 607 to 621 (PPPAPRPARPAPPSA) are enriched in pro residues. The 85-residue stretch at 624-708 (ESSEEETQRC…SCLRKKRKSQ (85 aa)) folds into the NET domain. Residues 629-638 (ETQRCRPMSY) are compositionally biased toward basic and acidic residues. Positions 725-738 (SSSESESSSESSTS) are enriched in low complexity. The segment covering 751–767 (QKKKGHSGRESRKHHHP) has biased composition (basic residues). The segment covering 788 to 799 (PSYPLPSSLDSS) has biased composition (low complexity). The segment covering 872-890 (PAMPPSASPPPPAPQPPQQ) has biased composition (pro residues). Residues 892 to 902 (HVHHHHHHHAQ) are compositionally biased toward basic residues. Polar residues predominate over residues 927–953 (LQKSQQPPTQSPIHSLLTSVKVQSQTP). The segment covering 968 to 983 (VYPPPPSTATTAPPPA) has biased composition (pro residues). Composition is skewed to low complexity over residues 994–1003 (PVVPQQLPAG) and 1011–1028 (QQQQ…SHQQ). Residues 1051-1350 (RQQKQETYPG…LMEIFEQNLF (300 aa)) form a C-terminal (CTD) region region. The span at 1075–1089 (PPVPPYPGLTHPPSP) shows a compositional bias: pro residues. 2 stretches are compositionally biased toward basic and acidic residues: residues 1150-1161 (PRPDLKKMDGGR) and 1176-1197 (PEKE…DIKI). Over residues 1214–1224 (PTSAGKSTSDS) the composition is skewed to polar residues. Residues 1226–1284 (ELFRRQAREKEERERALKLQAEQAERVRREQDRMSRTREDDEVQDQARKAHEEARRRQE) are compositionally biased toward basic and acidic residues. A compositionally biased stretch (low complexity) spans 1301 to 1310 (SPAQSSQPMM). The segment covering 1311 to 1323 (DQREMARKREQER) has biased composition (basic and acidic residues).

It belongs to the BET family.

The protein localises to the nucleus. The protein resides in the chromosome. Its function is as follows. Chromatin reader protein that recognizes and binds acetylated histones and plays a key role in transmission of epigenetic memory across cell divisions and transcription regulation. Remains associated with acetylated chromatin throughout the entire cell cycle and provides epigenetic memory for postmitotic G1 gene transcription by preserving acetylated chromatin status and maintaining high-order chromatin structure. During interphase, plays a key role in regulating the transcription of signal-inducible genes by associating with the P-TEFb complex and recruiting it to promoters. This is Bromodomain-containing protein 4A (brd4-a) from Xenopus laevis (African clawed frog).